A 781-amino-acid chain; its full sequence is Molybdenum cofactor sulfurase (781 aa).

Lysine 246 carries the N6-(pyridoxal phosphate)lysine modification. Cysteine 413 is an active-site residue. The MOSC domain maps to 635-781 (LRLLRQSGQR…MTCGDVVLVE (147 aa)). At serine 734 the chain carries Phosphoserine.

It belongs to the class-V pyridoxal-phosphate-dependent aminotransferase family. MOCOS subfamily. It depends on pyridoxal 5'-phosphate as a cofactor.

It catalyses the reaction Mo-molybdopterin + L-cysteine + AH2 = thio-Mo-molybdopterin + L-alanine + A + H2O. It participates in cofactor biosynthesis; molybdopterin biosynthesis. Functionally, sulfurates the molybdenum cofactor. Sulfation of molybdenum is essential for xanthine dehydrogenase (XDH) and aldehyde oxidase (ADO) enzymes in which molybdenum cofactor is liganded by 1 oxygen and 1 sulfur atom in active form. The chain is Molybdenum cofactor sulfurase from Drosophila melanogaster (Fruit fly).